The following is a 333-amino-acid chain: Beta-ketoacyl-[acyl-carrier-protein] synthase III (333 aa).

Residues cysteine 116 and histidine 258 contribute to the active site. The interval 259–263 is ACP-binding; that stretch reads QANKR. Residue asparagine 288 is part of the active site.

This sequence belongs to the thiolase-like superfamily. FabH family. Homodimer.

The protein localises to the cytoplasm. It catalyses the reaction malonyl-[ACP] + acetyl-CoA + H(+) = 3-oxobutanoyl-[ACP] + CO2 + CoA. The protein operates within lipid metabolism; fatty acid biosynthesis. Functionally, catalyzes the condensation reaction of fatty acid synthesis by the addition to an acyl acceptor of two carbons from malonyl-ACP. Catalyzes the first condensation reaction which initiates fatty acid synthesis and may therefore play a role in governing the total rate of fatty acid production. Possesses both acetoacetyl-ACP synthase and acetyl transacylase activities. Its substrate specificity determines the biosynthesis of branched-chain and/or straight-chain of fatty acids. The sequence is that of Beta-ketoacyl-[acyl-carrier-protein] synthase III from Koribacter versatilis (strain Ellin345).